Reading from the N-terminus, the 2215-residue chain is Unconventional myosin-VIIa (2215 aa).

A Myosin motor domain is found at 65–741; it reads HGVEDMIRLG…HDMLLEVERD (677 aa). Position 158–165 (158–165) interacts with ATP; it reads GESGAGKT. The segment at 632–639 is actin-binding; it reads FVRCIKPN. IQ domains are found at residues 745-765, 768-788, 791-811, 814-834, and 837-857; these read TDRV…SNFL, KNAA…KNYG, RLGF…QQYR, RQRI…KAFR, and LWAV…RLHQ. The SAH stretch occupies residues 858–935; the sequence is RLRAEYLWRL…LEQMERARHE (78 aa). In terms of domain architecture, MyTH4 1 spans 1017 to 1253; sequence YTRRPLKQPL…PSWLELQATK (237 aa). Residues 1258-1602 enclose the FERM 1 domain; it reads IMLPVTFMDG…LVVTFLEGLR (345 aa). At serine 1569 the chain carries Phosphoserine. At threonine 1571 the chain carries Phosphothreonine. The region spanning 1603 to 1672 is the SH3 domain; the sequence is KRSKYVVALQ…PTDSVYVMPT (70 aa). The 150-residue stretch at 1747–1896 folds into the MyTH4 2 domain; the sequence is HTREPLKQAL…PHLVEVEAIQ (150 aa). The FERM 2 domain maps to 1902–2205; it reads IFHKVYFPDD…SYISQMLTAM (304 aa).

Belongs to the TRAFAC class myosin-kinesin ATPase superfamily. Myosin family. In terms of assembly, might homodimerize in a two headed molecule through the formation of a coiled-coil rod. Identified in a complex with USH1C and USH1G. Interacts with MYRIP. Interacts with RPE65. Interacts with CIB2. May interact with CALM. Interacts with WHRN. Interacts with PLEKHB1 (via PH domain). Interacts with PCDH15. Interacts with TWF2. Interacts with USH1G. Interacts with MYH9. Interacts (via MyTH4-FERM domains) with cytoplasmic regions of ADGRV1 and USH2A. Interacts with PDZD7 (via MyTH4-FERM domains). Interacts with CALML4. In terms of tissue distribution, expressed in the pigment epithelium and the photoreceptor cells of the retina. Also found in kidney, liver, testis, cochlea, lymphocytes. Not expressed in brain.

The protein localises to the cytoplasm. It is found in the cell cortex. Its subcellular location is the cytoskeleton. It localises to the synapse. Its activity is regulated as follows. ATP hydrolysis is inhibited by Mg(2+), already at a concentration of 0.4 mM. In terms of biological role, myosins are actin-based motor molecules with ATPase activity. Unconventional myosins serve in intracellular movements. Their highly divergent tails bind to membranous compartments, which are then moved relative to actin filaments. In the retina, plays an important role in the renewal of the outer photoreceptor disks. Plays an important role in the distribution and migration of retinal pigment epithelial (RPE) melanosomes and phagosomes, and in the regulation of opsin transport in retinal photoreceptors. In the inner ear, plays an important role in differentiation, morphogenesis and organization of cochlear hair cell bundles. Involved in hair-cell vesicle trafficking of aminoglycosides, which are known to induce ototoxicity. Motor protein that is a part of the functional network formed by USH1C, USH1G, CDH23 and MYO7A that mediates mechanotransduction in cochlear hair cells. Required for normal hearing. The protein is Unconventional myosin-VIIa of Homo sapiens (Human).